Consider the following 498-residue polypeptide: Probable deoxyguanosinetriphosphate triphosphohydrolase (498 aa).

An HD domain is found at Arg-71–Cys-262.

Belongs to the dGTPase family. Type 1 subfamily. Requires Mg(2+) as cofactor.

It carries out the reaction dGTP + H2O = 2'-deoxyguanosine + triphosphate + H(+). Its function is as follows. dGTPase preferentially hydrolyzes dGTP over the other canonical NTPs. This Pseudomonas aeruginosa (strain ATCC 15692 / DSM 22644 / CIP 104116 / JCM 14847 / LMG 12228 / 1C / PRS 101 / PAO1) protein is Probable deoxyguanosinetriphosphate triphosphohydrolase.